The following is a 205-amino-acid chain: Rho-related protein racI (205 aa).

A GTP-binding site is contributed by 12–19; sequence GDSKTGKT. Residues 34 to 42 carry the Effector region motif; it reads YVPSHVDAT. GTP-binding positions include 59-63 and 119-122; these read DSSAL and TKCD. Cys-202 carries the post-translational modification Cysteine methyl ester. Cys-202 is lipidated: S-geranylgeranyl cysteine. A propeptide spans 203–205 (removed in mature form); that stretch reads IIQ.

It belongs to the small GTPase superfamily. Rho family.

The protein resides in the cell membrane. This chain is Rho-related protein racI (racI), found in Dictyostelium discoideum (Social amoeba).